A 113-amino-acid chain; its full sequence is Ig kappa chain V-II region 26-10 (113 aa).

Residues 1 to 23 (DVVMTQTPLSLPVSLGDQASISC) are framework-1. Residues C23 and C93 are joined by a disulfide bond. Residues 24–39 (RSSQSLVHSNGNTYLN) form a complementarity-determining-1 region. Residues 40–54 (WYLQKAGQSPKLLIY) are framework-2. The complementarity-determining-2 stretch occupies residues 55–61 (KVSNRFS). Residues 62-93 (GVPDRFSGSGSGTDFTLKISRVEAEDLGIYFC) are framework-3. Positions 94 to 102 (SQTTHVPPT) are complementarity-determining-3. The tract at residues 103–112 (FGGGTKLEIK) is framework-4.

The protein is Ig kappa chain V-II region 26-10 of Mus musculus (Mouse).